The primary structure comprises 153 residues: Transcription antitermination protein NusB (153 aa).

The protein belongs to the NusB family.

Its function is as follows. Involved in transcription antitermination. Required for transcription of ribosomal RNA (rRNA) genes. Binds specifically to the boxA antiterminator sequence of the ribosomal RNA (rrn) operons. This Nitratidesulfovibrio vulgaris (strain ATCC 29579 / DSM 644 / CCUG 34227 / NCIMB 8303 / VKM B-1760 / Hildenborough) (Desulfovibrio vulgaris) protein is Transcription antitermination protein NusB.